The primary structure comprises 340 residues: Ferredoxin--NADP reductase (340 aa).

Residues aspartate 33, glutamine 41, tyrosine 46, alanine 86, phenylalanine 120, aspartate 286, and threonine 327 each coordinate FAD.

The protein belongs to the ferredoxin--NADP reductase type 2 family. Homodimer. Requires FAD as cofactor.

The catalysed reaction is 2 reduced [2Fe-2S]-[ferredoxin] + NADP(+) + H(+) = 2 oxidized [2Fe-2S]-[ferredoxin] + NADPH. The sequence is that of Ferredoxin--NADP reductase from Rickettsia conorii (strain ATCC VR-613 / Malish 7).